Consider the following 553-residue polypeptide: Cytochrome P450 86A2 (553 aa).

A helical transmembrane segment spans residues 2–20 (DVSNTMLLVAVVAAYWLWF). Cys459 contributes to the heme binding site.

This sequence belongs to the cytochrome P450 family. The cofactor is heme. As to expression, expressed in leaves, stems, flowers and siliques. Expressed at low levels in roots. Expressed in guard cells of cotyledons and leaves.

The protein resides in the membrane. The enzyme catalyses an organic molecule + reduced [NADPH--hemoprotein reductase] + O2 = an alcohol + oxidized [NADPH--hemoprotein reductase] + H2O + H(+). Functionally, catalyzes the omega-hydroxylation of various fatty acids (FA). Acts on saturated and unsaturated fatty acids with chain lengths from C12 to C18. Plays a major role in the biosynthesis of extracellular lipids. Involved in the biosynthesis of hydroxylated fatty acids required for cutin biosynthesis, cuticle development and repression of bacterial type III gene expression. This Arabidopsis thaliana (Mouse-ear cress) protein is Cytochrome P450 86A2 (CYP86A2).